A 264-amino-acid chain; its full sequence is Acyl-[acyl-carrier-protein]--UDP-N-acetylglucosamine O-acyltransferase (264 aa).

It belongs to the transferase hexapeptide repeat family. LpxA subfamily. In terms of assembly, homotrimer.

The protein resides in the cytoplasm. It catalyses the reaction a (3R)-hydroxyacyl-[ACP] + UDP-N-acetyl-alpha-D-glucosamine = a UDP-3-O-[(3R)-3-hydroxyacyl]-N-acetyl-alpha-D-glucosamine + holo-[ACP]. The protein operates within glycolipid biosynthesis; lipid IV(A) biosynthesis; lipid IV(A) from (3R)-3-hydroxytetradecanoyl-[acyl-carrier-protein] and UDP-N-acetyl-alpha-D-glucosamine: step 1/6. In terms of biological role, involved in the biosynthesis of lipid A, a phosphorylated glycolipid that anchors the lipopolysaccharide to the outer membrane of the cell. This Rickettsia africae (strain ESF-5) protein is Acyl-[acyl-carrier-protein]--UDP-N-acetylglucosamine O-acyltransferase.